The following is a 445-amino-acid chain: Probable protein phosphatase 2C 14 (445 aa).

Residues 120–440 enclose the PPM-type phosphatase domain; the sequence is GFGVVSRNGK…DDITVVIIDL (321 aa). Residues Asp156, Gly157, and Asp318 each coordinate Mn(2+). Residues 384–404 are disordered; that stretch reads NSENESPSLNREIGSSPSKSP. Positions 390–404 are enriched in polar residues; that stretch reads PSLNREIGSSPSKSP. Asp431 contacts Mn(2+).

It belongs to the PP2C family. Mg(2+) serves as cofactor. Mn(2+) is required as a cofactor.

It catalyses the reaction O-phospho-L-seryl-[protein] + H2O = L-seryl-[protein] + phosphate. The catalysed reaction is O-phospho-L-threonyl-[protein] + H2O = L-threonyl-[protein] + phosphate. The polypeptide is Probable protein phosphatase 2C 14 (Arabidopsis thaliana (Mouse-ear cress)).